An 814-amino-acid polypeptide reads, in one-letter code: G-type lectin S-receptor-like serine/threonine-protein kinase At1g61370 (814 aa).

Positions 1 to 25 are cleaved as a signal peptide; the sequence is MGKIGIVFFASLLFLLIIFPSCAFA. The Bulb-type lectin domain occupies 26–145; sequence AITRASPLSI…VSERNLWESF (120 aa). Residues 26–433 lie on the Extracellular side of the membrane; that stretch reads AITRASPLSI…SELAGSNRVK (408 aa). Asn43, Asn54, Asn89, Asn95, Asn253, and Asn271 each carry an N-linked (GlcNAc...) asparagine glycan. Positions 282 to 318 constitute an EGF-like domain; that stretch reads PVSSCDVYNTCGPFGLCIRSNPPKCECLKGFVPKSDE. 2 disulfides stabilise this stretch: Cys286/Cys298 and Cys292/Cys306. Asn324, Asn334, Asn340, and Asn383 each carry an N-linked (GlcNAc...) asparagine glycan. In terms of domain architecture, PAN spans 337-423; it reads CDVNSSATAQ…GETLSIRLAS (87 aa). Disulfide bonds link Cys376–Cys397 and Cys380–Cys386. The chain crosses the membrane as a helical span at residues 434–454; that stretch reads IIVASIVSISVFMILVFASYW. Residues 455–814 are Cytoplasmic-facing; the sequence is YWRYKAKQND…NITQTAIVGR (360 aa). A Protein kinase domain is found at 501–786; the sequence is FSMENKLGQG…DLPKPKQPVF (286 aa). ATP-binding positions include 507–515 and Lys529; that span reads LGQGGFGPV. A phosphoserine mark is found at Ser535 and Ser550. Residues 590 to 607 form a caM-binding region; sequence TKKLELDWPKRFEIIQGI. Asp626 functions as the Proton acceptor in the catalytic mechanism. Phosphoserine is present on residues Ser630 and Ser643. Thr660 carries the post-translational modification Phosphothreonine. 4 positions are modified to phosphoserine: Ser703, Ser704, Ser797, and Ser802. A Phosphothreonine modification is found at Thr809.

This sequence belongs to the protein kinase superfamily. Ser/Thr protein kinase family.

It is found in the cell membrane. The enzyme catalyses L-seryl-[protein] + ATP = O-phospho-L-seryl-[protein] + ADP + H(+). The catalysed reaction is L-threonyl-[protein] + ATP = O-phospho-L-threonyl-[protein] + ADP + H(+). The sequence is that of G-type lectin S-receptor-like serine/threonine-protein kinase At1g61370 from Arabidopsis thaliana (Mouse-ear cress).